Consider the following 104-residue polypeptide: uncharacterized protein (104 aa).

This is an uncharacterized protein from Mycoplasma genitalium (strain ATCC 33530 / DSM 19775 / NCTC 10195 / G37) (Mycoplasmoides genitalium).